The following is a 72-amino-acid chain: Rubredoxin (72 aa).

One can recognise a Rubredoxin-like domain in the interval Asp-19 to Gly-72. The Fe cation site is built by Cys-24, Cys-27, Cys-57, and Cys-60.

This sequence belongs to the rubredoxin family. Fe(3+) is required as a cofactor.

Its function is as follows. Rubredoxin is a small nonheme, iron protein lacking acid-labile sulfide. Its single Fe, chelated to 4 Cys, functions as an electron acceptor and may also stabilize the conformation of the molecule. Could be involved in hydrogenase-linked redox processes. The polypeptide is Rubredoxin (hoxR) (Azotobacter vinelandii).